A 321-amino-acid polypeptide reads, in one-letter code: UPF0676 protein C1494.01 (321 aa).

Residues 159–267 (EEDVLRLLKY…RQTIAYFVTP (109 aa)) enclose the Fe2OG dioxygenase domain.

The protein belongs to the UPF0676 family.

It is found in the cytoplasm. The protein localises to the nucleus. The polypeptide is UPF0676 protein C1494.01 (Schizosaccharomyces pombe (strain 972 / ATCC 24843) (Fission yeast)).